Here is a 451-residue protein sequence, read N- to C-terminus: MATPLVAGPAALRFAAAASWQVVRGRCVEHFPRVLEFLRSLRAVAPGLVRYRHHERLCMGLKAKVVVELILQGRPWAQVLKALNHHFPESGPIVRDPKATKQDLRKILEAQETFYQQVKQLSEAPVDLASKLQELEQEYGEPFLAAMEKLLFEYLCQLEKALPTPQAQQLQDVLSWMQPGVSITSSLAWRQYGVDMGWLLPECSVTDSVNLAEPMEQNPPQQQRLALHNPLPKAKPGTHLPQGPSSRTHPEPLAGRHFNLAPLGRRRVQSQWASTRGGHKERPTVMLFPFRNLGSPTQVISKPESKEEHAIYTADLAMGTRAASTGKSKSPCQTLGGRALKENPVDLPATEQKENCLDCYMDPLRLSLLPPRARKPVCPPSLCSSVITIGDLVLDSDEEENGQGEGKESLENYQKTKFDTLIPTLCEYLPPSGHGAIPVSSCDCRDSSRPL.

Ala2 carries the post-translational modification N-acetylalanine. Positions Asn229–His257 are disordered. Residues Arg256–Gly278 carry the TBM motif. Residues Pro262–Val268 carry the Nuclear localization signal motif. At Ser295 the chain carries Phosphoserine. Glycyl lysine isopeptide (Lys-Gly) (interchain with G-Cter in SUMO2) cross-links involve residues Lys302, Lys306, Lys341, and Lys353.

As to quaternary structure, monomer. Found in a complex with POT1; TERF1 and TNKS1. Component of the shelterin complex (telosome) composed of TERF1, TERF2, TINF2, TERF2IP ACD and POT1. Interacts with TERF1, TERF2 and ACD. As to expression, detected in heart, brain, placenta, lung, liver, skeletal muscle, kidney and pancreas.

It localises to the nucleus. Its subcellular location is the chromosome. The protein resides in the telomere. The protein localises to the nucleus matrix. Its function is as follows. Component of the shelterin complex (telosome) that is involved in the regulation of telomere length and protection. Shelterin associates with arrays of double-stranded TTAGGG repeats added by telomerase and protects chromosome ends; without its protective activity, telomeres are no longer hidden from the DNA damage surveillance and chromosome ends are inappropriately processed by DNA repair pathways. Plays a role in shelterin complex assembly. Isoform 1 may have additional role in tethering telomeres to the nuclear matrix. The sequence is that of TERF1-interacting nuclear factor 2 (TINF2) from Homo sapiens (Human).